Here is a 254-residue protein sequence, read N- to C-terminus: Putative hydro-lyase SACE_1553 (254 aa).

Belongs to the D-glutamate cyclase family.

In Saccharopolyspora erythraea (strain ATCC 11635 / DSM 40517 / JCM 4748 / NBRC 13426 / NCIMB 8594 / NRRL 2338), this protein is Putative hydro-lyase SACE_1553.